The following is a 396-amino-acid chain: Cystathionine beta-lyase (396 aa).

Position 214 is an N6-(pyridoxal phosphate)lysine (K214).

The protein belongs to the trans-sulfuration enzymes family. As to quaternary structure, homodimer. Pyridoxal 5'-phosphate serves as cofactor.

It localises to the cytoplasm. The enzyme catalyses L,L-cystathionine + H2O = L-homocysteine + pyruvate + NH4(+). It carries out the reaction an S-substituted L-cysteine + H2O = a thiol + pyruvate + NH4(+). The protein operates within amino-acid biosynthesis; L-methionine biosynthesis via de novo pathway; L-homocysteine from L-cystathionine: step 1/1. Functionally, catalyzes the cleavage of cystathionine to homocysteine, pyruvate and ammonia during methionine biosynthesis. Also has cytotoxic activity toward osteogenic, osteosarcoma and tracheal cells, in vitro. The chemical basis for cell toxicity might be the formation and subsequent transfer of sulfane-sulfur to proteins, derived via beta-cystathionase cleavage of L-cystine. This is Cystathionine beta-lyase (metC) from Bordetella avium.